Reading from the N-terminus, the 535-residue chain is Putative transcription activator BRLF1 homolog (535 aa).

The segment at 384–426 is disordered; the sequence is KTNFPLKRKRQSRNIDPNTPRRPRGRPKGSKTKKRPTCSPALF. Residues 404–419 show a composition bias toward basic residues; the sequence is RRPRGRPKGSKTKKRP.

It belongs to the herpesviridae TAF50 family.

Transcription activation. Regulates the delayed-early 110 kDa promoter. The sequence is that of Putative transcription activator BRLF1 homolog (50) from Saimiriine herpesvirus 2 (strain 11) (SaHV-2).